The chain runs to 182 residues: MLLVIGLGNPGKEYQYTRHNVGFIAIEKIANQYNSSFSTKKKFNCEIAETISDRQKIIFIKPTTYMNLSGKSVISVKTYYNIYPAKIFVIHDDIDLETGRIKFKTGGGNGGHNGLKSIDGVIGNNYNRIRIGVGRPQNNQDVADYVLNHFSKPEYKTVMQAIDRITSNFGLILENKLEEFKN.

A tRNA-binding site is contributed by Tyr14. His19 (proton acceptor) is an active-site residue. The tRNA site is built by Tyr65, Asn67, and Asn113.

Belongs to the PTH family. Monomer.

The protein resides in the cytoplasm. It carries out the reaction an N-acyl-L-alpha-aminoacyl-tRNA + H2O = an N-acyl-L-amino acid + a tRNA + H(+). Functionally, hydrolyzes ribosome-free peptidyl-tRNAs (with 1 or more amino acids incorporated), which drop off the ribosome during protein synthesis, or as a result of ribosome stalling. Its function is as follows. Catalyzes the release of premature peptidyl moieties from peptidyl-tRNA molecules trapped in stalled 50S ribosomal subunits, and thus maintains levels of free tRNAs and 50S ribosomes. This is Peptidyl-tRNA hydrolase from Rickettsia peacockii (strain Rustic).